A 350-amino-acid chain; its full sequence is Arginine N-succinyltransferase (350 aa).

L125 is a succinyl-CoA binding site. Residue H229 is the Proton donor of the active site.

Belongs to the arginine N-succinyltransferase family.

It catalyses the reaction succinyl-CoA + L-arginine = N(2)-succinyl-L-arginine + CoA + H(+). The protein operates within amino-acid degradation; L-arginine degradation via AST pathway; L-glutamate and succinate from L-arginine: step 1/5. Functionally, catalyzes the transfer of succinyl-CoA to arginine to produce N(2)-succinylarginine. The protein is Arginine N-succinyltransferase of Yersinia pseudotuberculosis serotype IB (strain PB1/+).